Reading from the N-terminus, the 322-residue chain is Transcription factor IIIA (322 aa).

9 C2H2-type zinc fingers span residues 12–36 (FVCS…YCKH), 42–64 (FACD…NLSH), 70–95 (YQCL…ERVH), 102–126 (YVCD…KCEH), 132–156 (FECQ…EKVH), 159–184 (YPCA…KAAH), 188–211 (LQCD…LFVH), 218–243 (FKCT…LSFH), and 249–273 (FICP…AVVH). A disordered region spans residues 272–322 (VHDPQKKKLQKKTKRGRKKKLEPKTNVSDDSELPAQLHGLSLNTSTSQNNP). A compositionally biased stretch (basic residues) spans 278-292 (KKLQKKTKRGRKKKL). The segment covering 312 to 322 (SLNTSTSQNNP) has biased composition (polar residues).

The protein localises to the nucleus. Involved in ribosomal large subunit biogenesis. Interacts with the internal control region (ICR) of approximately 50 bases within the 5S RNA genes, is required for correct transcription of these genes by RNA polymerase III. Also binds the transcribed 5S RNA's. The protein is Transcription factor IIIA (gtf3a) of Ictalurus punctatus (Channel catfish).